A 190-amino-acid polypeptide reads, in one-letter code: MFIAVEGIDGAGKTTLAKSLSSLLEKEGFRVFLTREPTDDIRNYEGDDVELFIKFTLDRYKHQKEIRKKLNEGFVVISDRYIRSSYAYEMKGAAAALGSEEKAKEWMDCVSNIITIRPDINILVQVDVQVGLDRISKRNGTITHFEQRERLNEALKIYNSFDWDIKVDGTDPLDKITNEVYLYLKNKIGL.

Residue 7 to 14 (GIDGAGKT) participates in ATP binding.

Belongs to the thymidylate kinase family.

It catalyses the reaction dTMP + ATP = dTDP + ADP. This Thermoplasma volcanium (strain ATCC 51530 / DSM 4299 / JCM 9571 / NBRC 15438 / GSS1) protein is Probable thymidylate kinase.